Consider the following 477-residue polypeptide: V-type proton ATPase subunit B (477 aa).

Arg-365 serves as a coordination point for ATP.

The protein belongs to the ATPase alpha/beta chains family. In terms of assembly, V-ATPase is a heteromultimeric enzyme composed of a peripheral catalytic V1 complex (components A to H) attached to an integral membrane V0 proton pore complex (components: a, c, c', c'', d, e, f and VOA1).

It is found in the vacuole membrane. In terms of biological role, non-catalytic subunit of the V1 complex of vacuolar(H+)-ATPase (V-ATPase), a multisubunit enzyme composed of a peripheral complex (V1) that hydrolyzes ATP and a membrane integral complex (V0) that translocates protons. V-ATPase is responsible for acidifying and maintaining the pH of intracellular compartments. The chain is V-type proton ATPase subunit B from Encephalitozoon cuniculi (strain GB-M1) (Microsporidian parasite).